A 97-amino-acid chain; its full sequence is Large ribosomal subunit protein uL23 (97 aa).

The protein belongs to the universal ribosomal protein uL23 family. In terms of assembly, part of the 50S ribosomal subunit. Contacts protein L29, and trigger factor when it is bound to the ribosome.

One of the early assembly proteins it binds 23S rRNA. One of the proteins that surrounds the polypeptide exit tunnel on the outside of the ribosome. Forms the main docking site for trigger factor binding to the ribosome. This Anaeromyxobacter dehalogenans (strain 2CP-C) protein is Large ribosomal subunit protein uL23.